The sequence spans 330 residues: Polyprenal reductase (330 aa).

Over 1–16 (MAGWAGFELSALNPLR) the chain is Cytoplasmic. A helical transmembrane segment spans residues 17–37 (TLWLALAAAFLFALLLQLAPA). Over 38 to 80 (RLLPSCALFQDLLRYGKTKQSGSRRPAVCRAFDVPKRYFSHFY) the chain is Lumenal. A helical membrane pass occupies residues 81–101 (VISVVWNGSLLWLLSQSLFLG). Residues 102–132 (APFPNWLSALLRTLGATQFQALEMESKASRM) lie on the Cytoplasmic side of the membrane. A helical transmembrane segment spans residues 133-153 (PAAELALSAFLVLVFLWVHSL). Residues 154–169 (RRLFECFYVSVFSNAA) are Lumenal-facing. A helical membrane pass occupies residues 170–190 (IHVVQYCFGLVYYVLVGLTVL). The Cytoplasmic portion of the chain corresponds to 191–206 (SQVPMDDKNVYVLGKN). Residues 207–227 (LLIQARWFHILGMVMFFWSSA) form a helical membrane-spanning segment. Topologically, residues 228-277 (HQYKCHVILSNLRRNKKGVVIHCQHRIPFGDWFEYVSSANYLAELMIYIS) are lumenal. Residues 278-298 (MAVTFGLHNLTWWLVVTYVFS) traverse the membrane as a helical segment. At 299 to 330 (SQALSAFFNHKFYRSTFVSYPKHRKAFLPFLF) the chain is on the cytoplasmic side.

Belongs to the steroid 5-alpha reductase family. Polyprenal reductase subfamily.

Its subcellular location is the endoplasmic reticulum membrane. It carries out the reaction a di-trans,poly-cis-dolichal + NADP(+) = a di-trans,poly-cis-polyprenal + NADPH + H(+). It catalyses the reaction a 3-oxo-5alpha-steroid + NADP(+) = a 3-oxo-Delta(4)-steroid + NADPH + H(+). The enzyme catalyses androst-4-ene-3,17-dione + NADPH + H(+) = 5alpha-androstan-3,17-dione + NADP(+). The catalysed reaction is 17beta-hydroxy-5alpha-androstan-3-one + NADP(+) = testosterone + NADPH + H(+). Its pathway is protein modification; protein glycosylation. Functionally, plays a key role in early steps of protein N-linked glycosylation by being involved in the conversion of polyprenol into dolichol. Acts as a polyprenal reductase that mediates the reduction of polyprenal into dolichal in a NADP-dependent mechanism. Dolichols are required for the synthesis of dolichol-linked monosaccharides and the oligosaccharide precursor used for N-glycosylation. Also able to convert testosterone (T) into 5-alpha-dihydrotestosterone (DHT). The polypeptide is Polyprenal reductase (Mus musculus (Mouse)).